The primary structure comprises 256 residues: Cell division protein FtsQ (256 aa).

Over 1–23 (MIKAVKMNTSFDKEKVRKHLPGA) the chain is Cytoplasmic. The helical transmembrane segment at 24–44 (IFLSLVVITSLWLVISTISWM) threads the bilayer. Over 45 to 256 (TDEDRLPLSH…SDDVENKEEN (212 aa)) the chain is Periplasmic. The region spanning 50–120 (LPLSHMIIQG…ETIKVFVVEH (71 aa)) is the POTRA domain.

The protein belongs to the FtsQ/DivIB family. FtsQ subfamily. Part of a complex composed of FtsB, FtsL and FtsQ.

It localises to the cell inner membrane. Functionally, essential cell division protein. May link together the upstream cell division proteins, which are predominantly cytoplasmic, with the downstream cell division proteins, which are predominantly periplasmic. May control correct divisome assembly. The protein is Cell division protein FtsQ of Aliivibrio fischeri (strain ATCC 700601 / ES114) (Vibrio fischeri).